The sequence spans 263 residues: Versicolorin reductase 1 (263 aa).

Residues Ile22, Asp68, Asn95, and Arg128 each coordinate NADP(+). Active-site proton donor residues include Ser144 and Ser145. The NADP(+) site is built by Tyr159, Lys163, Ile192, and Thr194. The active-site Proton acceptor is the Tyr159. Lys163 serves as the catalytic Lowers pKa of active site Tyr.

This sequence belongs to the short-chain dehydrogenases/reductases (SDR) family.

It is found in the cytoplasm. The protein resides in the cytosol. It functions in the pathway mycotoxin biosynthesis. Versicolorin reductase; part of the fragmented gene cluster that mediates the biosynthesis of dothistromin (DOTH), a polyketide toxin very similar in structure to the aflatoxin precursor, versicolorin B. The first step of the pathway is the conversion of acetate to norsolorinic acid (NOR) and requires the fatty acid synthase subunits hexA and hexB, as well as the polyketide synthase pksA. PksA combines a hexanoyl starter unit and 7 malonyl-CoA extender units to synthesize the precursor NOR. The hexanoyl starter unit is provided to the acyl-carrier protein (ACP) domain by the fungal fatty acid synthase hexA/hexB. The second step is the conversion of NOR to averantin (AVN) and requires the norsolorinic acid ketoreductase nor1, which catalyzes the dehydration of norsolorinic acid to form (1'S)-averantin. The cytochrome P450 monooxygenase avnA then catalyzes the hydroxylation of AVN to 5'hydroxyaverantin (HAVN). The next step is performed by adhA that transforms HAVN to averufin (AVF). Averufin might then be converted to hydroxyversicolorone by cypX and avfA. Hydroxyversicolorone is further converted versiconal hemiacetal acetate (VHA) by moxY. VHA is then the substrate for the versiconal hemiacetal acetate esterase est1 to yield versiconal (VAL). Versicolorin B synthase vbsA then converts VAL to versicolorin B (VERB) by closing the bisfuran ring. Then, the activity of the versicolorin B desaturase verB leads to versicolorin A (VERA). DotB, a predicted chloroperoxidase, may perform epoxidation of the A-ring of VERA. Alternatively, a cytochrome P450, such as cypX or avnA could catalyze this step. It is also possible that another, uncharacterized, cytochrome P450 enzyme is responsible for this step. Opening of the epoxide could potentially be achieved by the epoxide hydrolase epoA. However, epoA seems not to be required for DOTH biosynthesis, but other epoxide hydrolases may have the ability to complement this hydrolysis. Alternatively, opening of the epoxide ring could be achieved non-enzymatically. The next step is the deoxygenation of ring A to yield the 5,8-dihydroxyanthraquinone which is most likely catalyzed by the NADPH dehydrogenase encoded by ver1. The last stages of DOTH biosynthesis are proposed to involve hydroxylation of the bisfuran. OrdB and norB might have oxidative roles here. An alternative possibility is that cytochrome P450 monoogenases such as avnA and cypX might perform these steps in addition to previously proposed steps. This chain is Versicolorin reductase 1, found in Dothistroma septosporum (Red band needle blight fungus).